Consider the following 950-residue polypeptide: Leucine--tRNA ligase (950 aa).

The 'HIGH' region motif lies at 41 to 52; that stretch reads PYPSGDGLHVGH. Residues 718 to 722 carry the 'KMSKS' region motif; sequence KMSKS. ATP is bound at residue Lys-721.

This sequence belongs to the class-I aminoacyl-tRNA synthetase family.

The protein resides in the cytoplasm. It carries out the reaction tRNA(Leu) + L-leucine + ATP = L-leucyl-tRNA(Leu) + AMP + diphosphate. The protein is Leucine--tRNA ligase of Rhodopirellula baltica (strain DSM 10527 / NCIMB 13988 / SH1).